The following is a 421-amino-acid chain: UDP-N-acetylglucosamine 1-carboxyvinyltransferase (421 aa).

Residue 23–24 (KN) coordinates phosphoenolpyruvate. Residue Arg92 participates in UDP-N-acetyl-alpha-D-glucosamine binding. Catalysis depends on Cys116, which acts as the Proton donor. Position 116 is a 2-(S-cysteinyl)pyruvic acid O-phosphothioketal (Cys116). UDP-N-acetyl-alpha-D-glucosamine contacts are provided by residues 121 to 125 (RPVDL), 161 to 164 (KVSV), Asp306, and Ile328.

The protein belongs to the EPSP synthase family. MurA subfamily.

It is found in the cytoplasm. It carries out the reaction phosphoenolpyruvate + UDP-N-acetyl-alpha-D-glucosamine = UDP-N-acetyl-3-O-(1-carboxyvinyl)-alpha-D-glucosamine + phosphate. It functions in the pathway cell wall biogenesis; peptidoglycan biosynthesis. Its function is as follows. Cell wall formation. Adds enolpyruvyl to UDP-N-acetylglucosamine. The protein is UDP-N-acetylglucosamine 1-carboxyvinyltransferase of Vibrio vulnificus (strain CMCP6).